The primary structure comprises 197 residues: Proteinase inhibitor type-2 (197 aa).

An N-terminal signal peptide occupies residues 1–24; that stretch reads MAVHKVSFVAHLLVLGMFLLLVDA. 3 consecutive repeat copies span residues 24–80, 81–140, and 141–196. 8 cysteine pairs are disulfide-bonded: Cys27/Cys115, Cys31/Cys111, Cys39/Cys121, Cys51/Cys88, Cys54/Cys72, Cys55/Cys84, Cys61/Cys97, and Cys114/Cys132.

It belongs to the protease inhibitor I20 (potato type II proteinase inhibitor) family.

The sequence is that of Proteinase inhibitor type-2 from Nicotiana tabacum (Common tobacco).